Reading from the N-terminus, the 288-residue chain is Sulfur carrier protein FdhD (288 aa).

The active-site Cysteine persulfide intermediate is the Cys-122. Residue 268–273 (FVRGER) participates in Mo-bis(molybdopterin guanine dinucleotide) binding.

The protein belongs to the FdhD family.

Its subcellular location is the cytoplasm. Functionally, required for formate dehydrogenase (FDH) activity. Acts as a sulfur carrier protein that transfers sulfur from IscS to the molybdenum cofactor prior to its insertion into FDH. This Anaeromyxobacter sp. (strain K) protein is Sulfur carrier protein FdhD.